A 164-amino-acid polypeptide reads, in one-letter code: MKKQVVEVLVEGGKATPGPPLGPAIGPLGLNVKQVVDKINEATKEFAGMQVPVKIIVDPVTKQFEIEVGVPPTSQLIKKELGLEKGSGEPKHNIVGNLTMEQVIKIAKMKRSQMLALTLKAAAKEVIGTALSMGVTVEGKDPRIVQREIDEGVYDELFEKAEKE.

This sequence belongs to the universal ribosomal protein uL11 family. Part of the ribosomal stalk of the 50S ribosomal subunit. Interacts with L10 and the large rRNA to form the base of the stalk. L10 forms an elongated spine to which L12 dimers bind in a sequential fashion forming a multimeric L10(L12)X complex.

Its function is as follows. Forms part of the ribosomal stalk which helps the ribosome interact with GTP-bound translation factors. This Pyrococcus horikoshii (strain ATCC 700860 / DSM 12428 / JCM 9974 / NBRC 100139 / OT-3) protein is Large ribosomal subunit protein uL11.